The sequence spans 446 residues: Bifunctional protein GlmU (446 aa).

The interval 1 to 225 (MEGIILAAGK…ETEVYGVNDR (225 aa)) is pyrophosphorylase. UDP-N-acetyl-alpha-D-glucosamine is bound by residues 6-9 (LAAG), Lys-20, Gln-70, and 75-76 (GT). Asp-98 is a binding site for Mg(2+). Residues Gly-135, Glu-150, Asn-165, and Asn-223 each contribute to the UDP-N-acetyl-alpha-D-glucosamine site. Asn-223 contributes to the Mg(2+) binding site. Residues 226–246 (VQLARLTKGVYRRKAEALMQE) are linker. Residues 247 to 446 (GVTIIDPETV…RQVNKEDYVK (200 aa)) form an N-acetyltransferase region. Residues Arg-328 and Lys-346 each contribute to the UDP-N-acetyl-alpha-D-glucosamine site. Catalysis depends on His-358, which acts as the Proton acceptor. 2 residues coordinate UDP-N-acetyl-alpha-D-glucosamine: Tyr-361 and Asn-372. Residues Ala-375, 381 to 382 (NY), Ser-400, Ala-418, and Arg-435 each bind acetyl-CoA.

The protein in the N-terminal section; belongs to the N-acetylglucosamine-1-phosphate uridyltransferase family. This sequence in the C-terminal section; belongs to the transferase hexapeptide repeat family. In terms of assembly, homotrimer. The cofactor is Mg(2+).

The protein resides in the cytoplasm. The catalysed reaction is alpha-D-glucosamine 1-phosphate + acetyl-CoA = N-acetyl-alpha-D-glucosamine 1-phosphate + CoA + H(+). It carries out the reaction N-acetyl-alpha-D-glucosamine 1-phosphate + UTP + H(+) = UDP-N-acetyl-alpha-D-glucosamine + diphosphate. It participates in nucleotide-sugar biosynthesis; UDP-N-acetyl-alpha-D-glucosamine biosynthesis; N-acetyl-alpha-D-glucosamine 1-phosphate from alpha-D-glucosamine 6-phosphate (route II): step 2/2. Its pathway is nucleotide-sugar biosynthesis; UDP-N-acetyl-alpha-D-glucosamine biosynthesis; UDP-N-acetyl-alpha-D-glucosamine from N-acetyl-alpha-D-glucosamine 1-phosphate: step 1/1. It functions in the pathway bacterial outer membrane biogenesis; LPS lipid A biosynthesis. Catalyzes the last two sequential reactions in the de novo biosynthetic pathway for UDP-N-acetylglucosamine (UDP-GlcNAc). The C-terminal domain catalyzes the transfer of acetyl group from acetyl coenzyme A to glucosamine-1-phosphate (GlcN-1-P) to produce N-acetylglucosamine-1-phosphate (GlcNAc-1-P), which is converted into UDP-GlcNAc by the transfer of uridine 5-monophosphate (from uridine 5-triphosphate), a reaction catalyzed by the N-terminal domain. This Carboxydothermus hydrogenoformans (strain ATCC BAA-161 / DSM 6008 / Z-2901) protein is Bifunctional protein GlmU.